The primary structure comprises 291 residues: 4-hydroxy-tetrahydrodipicolinate synthase (291 aa).

T44 serves as a coordination point for pyruvate. Residue Y132 is the Proton donor/acceptor of the active site. The active-site Schiff-base intermediate with substrate is K160. I202 lines the pyruvate pocket.

This sequence belongs to the DapA family. As to quaternary structure, homotetramer; dimer of dimers.

It localises to the cytoplasm. The catalysed reaction is L-aspartate 4-semialdehyde + pyruvate = (2S,4S)-4-hydroxy-2,3,4,5-tetrahydrodipicolinate + H2O + H(+). Its pathway is amino-acid biosynthesis; L-lysine biosynthesis via DAP pathway; (S)-tetrahydrodipicolinate from L-aspartate: step 3/4. Functionally, catalyzes the condensation of (S)-aspartate-beta-semialdehyde [(S)-ASA] and pyruvate to 4-hydroxy-tetrahydrodipicolinate (HTPA). The sequence is that of 4-hydroxy-tetrahydrodipicolinate synthase from Zymomonas mobilis subsp. mobilis (strain ATCC 31821 / ZM4 / CP4).